A 286-amino-acid chain; its full sequence is ATP synthase gamma chain (286 aa).

This sequence belongs to the ATPase gamma chain family. In terms of assembly, F-type ATPases have 2 components, CF(1) - the catalytic core - and CF(0) - the membrane proton channel. CF(1) has five subunits: alpha(3), beta(3), gamma(1), delta(1), epsilon(1). CF(0) has three main subunits: a, b and c.

It is found in the cell inner membrane. Functionally, produces ATP from ADP in the presence of a proton gradient across the membrane. The gamma chain is believed to be important in regulating ATPase activity and the flow of protons through the CF(0) complex. This is ATP synthase gamma chain from Pseudomonas putida (strain GB-1).